The sequence spans 744 residues: C-type polyheme cytochrome OmcB (744 aa).

The first 23 residues, 1–23 (MSRKVTKYSAVLAVSLFAAALAG), serve as a signal peptide directing secretion. A lipid anchor (N-palmitoyl cysteine) is attached at C24. C24 is lipidated: S-diacylglycerol cysteine. Heme c contacts are provided by C48, C51, H52, C81, C84, H85, C107, C110, H111, C141, C144, H145, C185, C188, H189, C225, C228, H229, C303, C306, H307, C382, C385, H386, C430, C433, H434, C480, C483, H484, C555, C558, H559, C587, C590, and H591.

In terms of processing, binds 12 heme c groups per subunit.

The protein localises to the cell outer membrane. Its function is as follows. Involved in anaerobic respiration with Fe(3+) as terminal electron acceptor. Acts as an electron-transport mediator in the dissimilatory reduction of Fe(3+). The protein is C-type polyheme cytochrome OmcB (omcB) of Geobacter sulfurreducens (strain DL-1 / KN400).